A 475-amino-acid polypeptide reads, in one-letter code: uncharacterized protein (475 aa).

This is an uncharacterized protein from Acheta domesticus (House cricket).